Reading from the N-terminus, the 493-residue chain is tRNA(Ile)-lysidine synthase (493 aa).

26 to 31 (SGGSDS) serves as a coordination point for ATP.

The protein belongs to the tRNA(Ile)-lysidine synthase family.

It localises to the cytoplasm. The enzyme catalyses cytidine(34) in tRNA(Ile2) + L-lysine + ATP = lysidine(34) in tRNA(Ile2) + AMP + diphosphate + H(+). Functionally, ligates lysine onto the cytidine present at position 34 of the AUA codon-specific tRNA(Ile) that contains the anticodon CAU, in an ATP-dependent manner. Cytidine is converted to lysidine, thus changing the amino acid specificity of the tRNA from methionine to isoleucine. In Bartonella henselae (strain ATCC 49882 / DSM 28221 / CCUG 30454 / Houston 1) (Rochalimaea henselae), this protein is tRNA(Ile)-lysidine synthase.